Here is a 180-residue protein sequence, read N- to C-terminus: Large ribosomal subunit protein uL6 (180 aa).

It belongs to the universal ribosomal protein uL6 family. As to quaternary structure, part of the 50S ribosomal subunit.

This protein binds to the 23S rRNA, and is important in its secondary structure. It is located near the subunit interface in the base of the L7/L12 stalk, and near the tRNA binding site of the peptidyltransferase center. The protein is Large ribosomal subunit protein uL6 of Anaeromyxobacter sp. (strain K).